The primary structure comprises 241 residues: Phosphoadenosine 5'-phosphosulfate reductase (241 aa).

C235 functions as the Nucleophile; cysteine thiosulfonate intermediate in the catalytic mechanism.

It belongs to the PAPS reductase family. CysH subfamily.

Its subcellular location is the cytoplasm. The catalysed reaction is [thioredoxin]-disulfide + sulfite + adenosine 3',5'-bisphosphate + 2 H(+) = [thioredoxin]-dithiol + 3'-phosphoadenylyl sulfate. It functions in the pathway sulfur metabolism; hydrogen sulfide biosynthesis; sulfite from sulfate: step 3/3. Catalyzes the formation of sulfite from phosphoadenosine 5'-phosphosulfate (PAPS) using thioredoxin as an electron donor. In Xanthomonas axonopodis pv. citri (strain 306), this protein is Phosphoadenosine 5'-phosphosulfate reductase.